Here is a 98-residue protein sequence, read N- to C-terminus: Alpha-elicitin capsicein (98 aa).

3 cysteine pairs are disulfide-bonded: Cys3/Cys71, Cys27/Cys56, and Cys51/Cys95.

The protein belongs to the elicitin family.

The protein resides in the secreted. In terms of biological role, induces local and distal defense responses (incompatible hypersensitive reaction) in plants from the solanaceae and cruciferae families. Elicits leaf necrosis and causes the accumulation of pathogenesis-related proteins. Might interact with the lipidic molecules of the plasma membrane. The protein is Alpha-elicitin capsicein of Phytophthora capsici.